A 308-amino-acid chain; its full sequence is HTH-type transcriptional activator AllS (308 aa).

Residues 2 to 59 (FDPETLRTFIAVAETGSFSKAAERLCKTTATISYRIKLLEENTGVALFFRTTRSVTLT) enclose the HTH lysR-type domain. The segment at residues 19–38 (FSKAAERLCKTTATISYRIK) is a DNA-binding region (H-T-H motif).

This sequence belongs to the LysR transcriptional regulatory family.

Positive regulator essential for the expression of allD operon. Binds to the allD promoter. In Escherichia coli O6:K15:H31 (strain 536 / UPEC), this protein is HTH-type transcriptional activator AllS (allS).